Here is a 607-residue protein sequence, read N- to C-terminus: MTVAPPSPNSPAAELQQRPPRYPGEDTTPTSKREIWGWYAYGIAAEVFAVCGVGSFLPLTLEQLAREQGTFKSSHLPCVGPGSPSTSVNGTAPAMLRRDEAENDQCVVGLLGLNINTASFAMYTFSLAVLVQALTLISFSALADYENNRKTLLLAFGFIGSATSMLFVFIAPPIFVLGALLVVIGVTCLGSSFVVLNSFLPVLVANDPSIEKASKPAEELHPMSPDGEYIHPRDSFSASDAESGPHPAAEAGSGTSSGPASPELQLSTRISSKGVGLGYCAAVLVQILSISLLFTLSKTSISKVSGTLPLRFVLLLVGIWWFSFTMVTRKWLRARPGPPLNTANTGGQVKRWRVWLRLVGFAWKSLWKTVKIAVQLREVLVFLAAWFLLSDAMATVSGTAILFARTELKMSTTLVGLLSITATLSGMAGAFLWPVVSRRFGLKSNHTIMLCIALFEIIPLYGMLAYIPVFKKWGVIGLQQPWEIFPLAIVHGVVSGGLSSYCRSFFGLLIPPGSEAAFYALYAATDKGSSVIGPAIVGMLIDATGQVRSGFFFIAPLILMPIPLIWIVNAEKGRREGVAMAQRLEKGHETEMSEQTEEAEGLLARGI.

Residues 1–29 (MTVAPPSPNSPAAELQQRPPRYPGEDTTP) form a disordered region. A helical transmembrane segment spans residues 41–61 (YGIAAEVFAVCGVGSFLPLTL). N-linked (GlcNAc...) asparagine glycosylation occurs at asparagine 89. Transmembrane regions (helical) follow at residues 119 to 139 (SFAMYTFSLAVLVQALTLISF), 151 to 170 (TLLLAFGFIGSATSMLFVFI), and 188 to 208 (CLGSSFVVLNSFLPVLVANDP). Residues 235 to 263 (SFSASDAESGPHPAAEAGSGTSSGPASPE) form a disordered region. The segment covering 247-263 (PAAEAGSGTSSGPASPE) has biased composition (low complexity). A run of 4 helical transmembrane segments spans residues 274 to 294 (GVGLGYCAAVLVQILSISLLF), 307 to 327 (TLPLRFVLLLVGIWWFSFTMV), 379 to 399 (VLVFLAAWFLLSDAMATVSGT), and 415 to 435 (VGLLSITATLSGMAGAFLWPV). A glycan (N-linked (GlcNAc...) asparagine) is linked at asparagine 445. 4 helical membrane-spanning segments follow: residues 450 to 470 (LCIALFEIIPLYGMLAYIPVF), 485 to 507 (FPLAIVHGVVSGGLSSYCRSFFG), 519 to 541 (YALYAATDKGSSVIGPAIVGMLI), and 550 to 570 (GFFFIAPLILMPIPLIWIVNA). The tract at residues 586–607 (KGHETEMSEQTEEAEGLLARGI) is disordered.

It belongs to the ATG22 family.

Its subcellular location is the vacuole membrane. Functionally, vacuolar effluxer which mediate the efflux of amino acids resulting from autophagic degradation. The release of autophagic amino acids allows the maintenance of protein synthesis and viability during nitrogen starvation. The chain is Autophagy-related protein 22-2 (atg22-2) from Aspergillus oryzae (strain ATCC 42149 / RIB 40) (Yellow koji mold).